We begin with the raw amino-acid sequence, 181 residues long: MEQYHGTTILSVRRQTADGIQVALGGDGQVTLGNIVVKGTARKVRKLYQGRVLAGFAGATADAFTLFERFEAKLEKHQGQLTRAAIELTKDWRTDRVLRRLEAMLAVADHSASLIITGNGDVLEPEQGIVAIGSGGAYAHSAAKALLSNTDLPAAEIVKKSLEIAGELCIYTNMHHTIETL.

Residue threonine 7 is part of the active site. Na(+) contacts are provided by glycine 166, cysteine 169, and threonine 172.

The protein belongs to the peptidase T1B family. HslV subfamily. In terms of assembly, a double ring-shaped homohexamer of HslV is capped on each side by a ring-shaped HslU homohexamer. The assembly of the HslU/HslV complex is dependent on binding of ATP.

The protein resides in the cytoplasm. The catalysed reaction is ATP-dependent cleavage of peptide bonds with broad specificity.. Allosterically activated by HslU binding. Functionally, protease subunit of a proteasome-like degradation complex believed to be a general protein degrading machinery. In Acidovorax ebreus (strain TPSY) (Diaphorobacter sp. (strain TPSY)), this protein is ATP-dependent protease subunit HslV.